The chain runs to 392 residues: Peptidoglycan hydrolase PcsB (392 aa).

The first 27 residues, 1-27, serve as a signal peptide directing secretion; that stretch reads MKKKILASLLLSTVMVSQVAVLTTAHA. Coiled-coil stretches lie at residues 34 to 96 and 191 to 227; these read IAAQ…LSKN and TKQAELKAAELSLAAEKATAEGEKASLLEQKAAAEAE. The interval 47-267 is interacts with large extracellular loop of FtsX; the sequence is QQQEAQKQVD…TAQVQAVSES (221 aa). One can recognise a Peptidase C51 domain in the interval 267–390; it reads SAAAPVRAKV…TSEGFVTYIY (124 aa).

As to quaternary structure, homodimer. Interacts (via N-terminal coiled coil domain) with FtsX (via large extracellular loop). This interaction directs PcsB to equatorial and septal sites of dividing cells. Interacts with FtsE.

The protein resides in the cell membrane. It is found in the cell septum. Its subcellular location is the secreted. Its activity is regulated as follows. Lacks peptidoglycan-hydrolase activity in vitro, probably due to auto-inhibition by the CC domain. In the homodimer, interaction between the CC domain in one monomer and the hydrolase active site in the peptidase C51/CHAP domain in the other monomer probably mediates auto-inhibition of the hydrolase activity. Peptidoglycan-hydrolase activity. Required in maintaining normal growth and cellular morphology. Involved in splitting of the septum during cell division. The sequence is that of Peptidoglycan hydrolase PcsB from Streptococcus pneumoniae serotype 2 (strain D39 / NCTC 7466).